Consider the following 89-residue polypeptide: Putative acyl-CoA-binding protein (89 aa).

The 86-residue stretch at 3-88 (VEEQFKTSAE…VKELVEKNGL (86 aa)) folds into the ACB domain. An acyl-CoA contacts are provided by residues Lys-15, 30–34 (YSLYK), Lys-52, Lys-56, and Tyr-75.

It belongs to the ACBP family.

In terms of biological role, binds medium- and long-chain acyl-CoA esters with very high affinity and may function as an intracellular carrier of acyl-CoA esters. In Hypsibius exemplaris (Freshwater tardigrade), this protein is Putative acyl-CoA-binding protein.